A 307-amino-acid polypeptide reads, in one-letter code: 1-aminocyclopropane-1-carboxylate oxidase 5 (307 aa).

Positions 106–134 (SNIKETMGEYREEVRKLASKMMEVMDENL) form a coiled coil. A Fe2OG dioxygenase domain is found at 152–256 (GEETAFFGTK…RRSIASFYNP (105 aa)). Residues histidine 180, aspartate 182, and histidine 237 each contribute to the Fe cation site. A 2-oxoglutarate-binding site is contributed by arginine 247.

The protein belongs to the iron/ascorbate-dependent oxidoreductase family. Fe(2+) serves as cofactor.

The enzyme catalyses 1-aminocyclopropane-1-carboxylate + L-ascorbate + O2 = ethene + L-dehydroascorbate + hydrogen cyanide + CO2 + 2 H2O. It participates in alkene biosynthesis; ethylene biosynthesis via S-adenosyl-L-methionine; ethylene from S-adenosyl-L-methionine: step 2/2. In terms of biological role, enzyme involved in the ethylene biosynthesis. This is 1-aminocyclopropane-1-carboxylate oxidase 5 from Arabidopsis thaliana (Mouse-ear cress).